The following is a 276-amino-acid chain: Formamidopyrimidine-DNA glycosylase (276 aa).

Pro2 functions as the Schiff-base intermediate with DNA in the catalytic mechanism. The active-site Proton donor is Glu3. The active-site Proton donor; for beta-elimination activity is the Lys58. DNA is bound by residues His94, Arg112, and Arg157. Residues 242 to 276 form an FPG-type zinc finger; sequence FVYDRAGEPCRVCGAPIRQIVQGQRSTYYCPNCQR. The active-site Proton donor; for delta-elimination activity is the Arg266.

It belongs to the FPG family. In terms of assembly, monomer. Zn(2+) is required as a cofactor.

The catalysed reaction is Hydrolysis of DNA containing ring-opened 7-methylguanine residues, releasing 2,6-diamino-4-hydroxy-5-(N-methyl)formamidopyrimidine.. The enzyme catalyses 2'-deoxyribonucleotide-(2'-deoxyribose 5'-phosphate)-2'-deoxyribonucleotide-DNA = a 3'-end 2'-deoxyribonucleotide-(2,3-dehydro-2,3-deoxyribose 5'-phosphate)-DNA + a 5'-end 5'-phospho-2'-deoxyribonucleoside-DNA + H(+). Functionally, involved in base excision repair of DNA damaged by oxidation or by mutagenic agents. Acts as a DNA glycosylase that recognizes and removes damaged bases. Has a preference for oxidized purines, such as 7,8-dihydro-8-oxoguanine (8-oxoG). Has AP (apurinic/apyrimidinic) lyase activity and introduces nicks in the DNA strand. Cleaves the DNA backbone by beta-delta elimination to generate a single-strand break at the site of the removed base with both 3'- and 5'-phosphates. In Burkholderia thailandensis (strain ATCC 700388 / DSM 13276 / CCUG 48851 / CIP 106301 / E264), this protein is Formamidopyrimidine-DNA glycosylase.